The chain runs to 142 residues: Large ribosomal subunit protein uL11 (142 aa).

The protein belongs to the universal ribosomal protein uL11 family. As to quaternary structure, part of the ribosomal stalk of the 50S ribosomal subunit. Interacts with L10 and the large rRNA to form the base of the stalk. L10 forms an elongated spine to which L12 dimers bind in a sequential fashion forming a multimeric L10(L12)X complex. One or more lysine residues are methylated.

Functionally, forms part of the ribosomal stalk which helps the ribosome interact with GTP-bound translation factors. The chain is Large ribosomal subunit protein uL11 from Beijerinckia indica subsp. indica (strain ATCC 9039 / DSM 1715 / NCIMB 8712).